We begin with the raw amino-acid sequence, 191 residues long: UPF0398 protein LCABL_17010 (191 aa).

This sequence belongs to the UPF0398 family.

This Lacticaseibacillus casei (strain BL23) (Lactobacillus casei) protein is UPF0398 protein LCABL_17010.